A 1037-amino-acid chain; its full sequence is Ribonuclease E (1037 aa).

Disordered regions lie at residues 1 to 23, 47 to 90, and 106 to 369; these read MAED…LPER, FDGR…ETPV, and VSEA…PILS. Residues 47–67 show a composition bias toward basic and acidic residues; the sequence is FDGRQRSAHSTVDKADAERVR. Low complexity-rich tracts occupy residues 68 to 90 and 106 to 126; these read AALT…ETPV and VSEA…PAAE. Composition is skewed to acidic residues over residues 127–141 and 196–226; these read AEAE…EAET and VVDD…DDDQ. The span at 230 to 242 shows a compositional bias: basic residues; sequence PRRRRRGRRGRGR. A compositionally biased stretch (acidic residues) spans 248–284; sequence NDDATSDADTDSTEDQTDGDEQESGEDSDDSGDEDST. Positions 291–301 are enriched in basic residues; the sequence is RRRRRRRRRKS. Over residues 320-335 the composition is skewed to basic and acidic residues; the sequence is VHERAPRTERSDKSDD. Residues 427 to 504 enclose the S1 motif domain; it reads GNIYLGIVQN…GHKGARLTTQ (78 aa). Residues 561 to 589 are a coiled coil; sequence EDIRSDVERLQKRWSEIEAKAAEVTEKKA. Mg(2+) is bound by residues D694 and D738. 2 residues coordinate Zn(2+): C796 and C799. The tract at residues 810–1037 is disordered; the sequence is PIDSASSNGG…ARPAGPPSHD (228 aa). Over residues 834–843 the composition is skewed to basic residues; that stretch reads RRGKRGKKGA. A compositionally biased stretch (basic and acidic residues) spans 844–864; the sequence is ARTEEVHVAKVPDHTPGEHPM. Residues 879–891 show a composition bias toward acidic residues; sequence EDHEDHEDHETAE. Positions 897 to 913 are enriched in basic and acidic residues; it reads EVRDDTRDEHDADERAH. Acidic residues predominate over residues 923 to 1006; it reads GDEDLDDSDE…DSDSDEDEEP (84 aa).

The protein belongs to the RNase E/G family. As to quaternary structure, assembles into a homotetramer formed by a dimer of dimers. Interacts with DNA-binding protein HhupB. It depends on Mg(2+) as a cofactor. Zn(2+) is required as a cofactor.

It localises to the cytoplasm. It catalyses the reaction Endonucleolytic cleavage of single-stranded RNA in A- and U-rich regions.. Its function is as follows. Endoribonuclease that plays a central role in RNA processing and decay. Plays a major role in pre-16S rRNA maturation, probably generating the mature 5'-end, and a minor role in pre-5S and pre-23S rRNA maturation. Probably also processes tRNA. RNase E and HupB jointly contribute to cellular adaptation to changing growth conditions and survival during antibiotic treatment. Overexpression or depletion leads to changes in gene expression; overexpression induces metabolic slowdown and cell stress while depleted strains grow less well than induced strains. This chain is Ribonuclease E (rne), found in Mycolicibacterium smegmatis (strain ATCC 700084 / mc(2)155) (Mycobacterium smegmatis).